A 242-amino-acid polypeptide reads, in one-letter code: Aspartate/glutamate leucyltransferase (242 aa).

Belongs to the R-transferase family. Bpt subfamily.

The protein resides in the cytoplasm. The catalysed reaction is N-terminal L-glutamyl-[protein] + L-leucyl-tRNA(Leu) = N-terminal L-leucyl-L-glutamyl-[protein] + tRNA(Leu) + H(+). It catalyses the reaction N-terminal L-aspartyl-[protein] + L-leucyl-tRNA(Leu) = N-terminal L-leucyl-L-aspartyl-[protein] + tRNA(Leu) + H(+). Its function is as follows. Functions in the N-end rule pathway of protein degradation where it conjugates Leu from its aminoacyl-tRNA to the N-termini of proteins containing an N-terminal aspartate or glutamate. In Chromobacterium violaceum (strain ATCC 12472 / DSM 30191 / JCM 1249 / CCUG 213 / NBRC 12614 / NCIMB 9131 / NCTC 9757 / MK), this protein is Aspartate/glutamate leucyltransferase.